The following is a 263-amino-acid chain: Tryptophan synthase alpha chain (263 aa).

Residues glutamate 49 and aspartate 60 each act as proton acceptor in the active site.

Belongs to the TrpA family. As to quaternary structure, tetramer of two alpha and two beta chains.

It carries out the reaction (1S,2R)-1-C-(indol-3-yl)glycerol 3-phosphate + L-serine = D-glyceraldehyde 3-phosphate + L-tryptophan + H2O. The protein operates within amino-acid biosynthesis; L-tryptophan biosynthesis; L-tryptophan from chorismate: step 5/5. In terms of biological role, the alpha subunit is responsible for the aldol cleavage of indoleglycerol phosphate to indole and glyceraldehyde 3-phosphate. This chain is Tryptophan synthase alpha chain, found in Cereibacter sphaeroides (strain ATCC 17025 / ATH 2.4.3) (Rhodobacter sphaeroides).